The primary structure comprises 257 residues: Zinc transporter ZupT (257 aa).

The next 8 helical transmembrane spans lie at 5–25, 33–53, 61–81, 109–129, 137–157, 171–191, 195–215, and 236–256; these read LILT…GVLG, LAFS…MEML, GMSP…YFGL, AILL…ATFV, LGFG…LAVA, IFWA…AWLI, LVSP…MVAL, and GVLC…TIGI. 2 residues coordinate Fe(2+): asparagine 120 and glutamate 123. Glutamate 123 and histidine 148 together coordinate Zn(2+). The Fe(2+) site is built by asparagine 149, glutamate 152, and glutamate 181. Zn(2+) is bound at residue glutamate 152.

Belongs to the ZIP transporter (TC 2.A.5) family. ZupT subfamily.

It localises to the cell inner membrane. It carries out the reaction Zn(2+)(in) = Zn(2+)(out). Its function is as follows. Mediates zinc uptake. May also transport other divalent cations. This Salmonella paratyphi A (strain ATCC 9150 / SARB42) protein is Zinc transporter ZupT.